Here is an 842-residue protein sequence, read N- to C-terminus: Glucans biosynthesis glucosyltransferase H (842 aa).

The next 7 membrane-spanning stretches (helical) occupy residues 140-160 (ILLL…KTIL), 194-214 (ILIL…TALM), 513-533 (VFLT…FLAL), 570-590 (LFAS…MLIW), 615-635 (VLLA…AFLG), 656-676 (FMRH…MAWL), and 680-700 (FLFW…VSVV).

This sequence belongs to the glycosyltransferase 2 family. OpgH subfamily.

Its subcellular location is the cell inner membrane. Its pathway is glycan metabolism; osmoregulated periplasmic glucan (OPG) biosynthesis. In terms of biological role, involved in the biosynthesis of osmoregulated periplasmic glucans (OPGs). The sequence is that of Glucans biosynthesis glucosyltransferase H from Citrobacter koseri (strain ATCC BAA-895 / CDC 4225-83 / SGSC4696).